The sequence spans 328 residues: Transcription factor bHLH84 (328 aa).

The segment at 145–248 (QCESSKKRTR…ASRGAATDPQ (104 aa)) is disordered. Basic and acidic residues predominate over residues 220 to 229 (LSKEDGEDSK). One can recognise a bHLH domain in the interval 243–292 (AATDPQSLYARKRRERINERLRILQHLVPNGTKVDISTMLEEAVQYVKFL).

The protein belongs to the bHLH protein family. In terms of assembly, homodimer.

The protein resides in the nucleus. In Arabidopsis thaliana (Mouse-ear cress), this protein is Transcription factor bHLH84 (BHLH84).